A 54-amino-acid polypeptide reads, in one-letter code: Large ribosomal subunit protein bL33 (54 aa).

It belongs to the bacterial ribosomal protein bL33 family.

This Herpetosiphon aurantiacus (strain ATCC 23779 / DSM 785 / 114-95) protein is Large ribosomal subunit protein bL33.